A 302-amino-acid polypeptide reads, in one-letter code: Large ribosomal subunit protein uL29m (302 aa).

The N-terminal 38 residues, 1 to 38, are a transit peptide targeting the mitochondrion; it reads MASSGAARPAASRVLQRCQPFSSSTSCAAPVTTWRTLA. A disordered region spans residues 255–302; that stretch reads EPVADHLETPETSGQEKVGELSPAGAVDPSTILASKTGKPVTDAPRSS.

This sequence belongs to the universal ribosomal protein uL29 family. As to quaternary structure, component of the mitochondrial large ribosomal subunit. Mature mitochondrial ribosomes consist of a small (37S) and a large (54S) subunit. The 37S subunit contains at least 33 different proteins and 1 molecule of RNA (15S). The 54S subunit contains at least 45 different proteins and 1 molecule of RNA (21S).

It is found in the mitochondrion. In Pyricularia oryzae (strain 70-15 / ATCC MYA-4617 / FGSC 8958) (Rice blast fungus), this protein is Large ribosomal subunit protein uL29m (MRPL4).